We begin with the raw amino-acid sequence, 364 residues long: MKRQLILEDGSFFVGERFGSLKETTGEVVFNTGMTGYQEILSDPSYCGQIVTMTYPLIGNYGINRDDFEAIRPHVHGFIVKEACVKPSNWRGELTLDEYLKEKGIPGLSGIDTRKLTRLIRQYGTLKGMICGLDVDPVEAAAKLRAMEWPRDQVRRVSTKSAYPSPGRGERIVLIDFGMKHGILRELNKRNCDVIVLPYNATAEEVLGWHPDGVMLSNGPGDPKDVPEAIEMIRGILGKVPLFGICLGHQLFALACGANTEKMKFGHRGSNHPVKDLRTGKVAITSQNHGYTVTHESLSGTRLEVTHIALNDGTVEGLRHLDVPAFTVQYHPEASPGPEDANPLFDEFLALIREFNKKGEVIHA.

CPSase regions lie at residues 1-167 and 1-171; these read MKRQ…PSPG and MKRQ…RGER. The L-glutamine site is built by S45, G219, and G221. The Glutamine amidotransferase type-1 domain maps to 171 to 358; sequence RIVLIDFGMK…LALIREFNKK (188 aa). Catalysis depends on C246, which acts as the Nucleophile. Positions 247, 250, 288, 290, and 291 each coordinate L-glutamine. Residues H331 and E333 contribute to the active site.

It belongs to the CarA family. As to quaternary structure, composed of two chains; the small (or glutamine) chain promotes the hydrolysis of glutamine to ammonia, which is used by the large (or ammonia) chain to synthesize carbamoyl phosphate. Tetramer of heterodimers (alpha,beta)4.

The catalysed reaction is hydrogencarbonate + L-glutamine + 2 ATP + H2O = carbamoyl phosphate + L-glutamate + 2 ADP + phosphate + 2 H(+). It carries out the reaction L-glutamine + H2O = L-glutamate + NH4(+). The protein operates within amino-acid biosynthesis; L-arginine biosynthesis; carbamoyl phosphate from bicarbonate: step 1/1. It functions in the pathway pyrimidine metabolism; UMP biosynthesis via de novo pathway; (S)-dihydroorotate from bicarbonate: step 1/3. Small subunit of the glutamine-dependent carbamoyl phosphate synthetase (CPSase). CPSase catalyzes the formation of carbamoyl phosphate from the ammonia moiety of glutamine, carbonate, and phosphate donated by ATP, constituting the first step of 2 biosynthetic pathways, one leading to arginine and/or urea and the other to pyrimidine nucleotides. The small subunit (glutamine amidotransferase) binds and cleaves glutamine to supply the large subunit with the substrate ammonia. This chain is Carbamoyl phosphate synthase small chain, found in Bacillus caldolyticus.